Here is a 373-residue protein sequence, read N- to C-terminus: NAD(P)H-quinone oxidoreductase subunit 1 (373 aa).

Helical transmembrane passes span 28–48 (LLWLPLPMLLVLVAAVVGVLV), 98–118 (LLFTLGPVLVVVPVIISWLII), 129–149 (VGVGIFLWISFSSIQPIGLLM), 177–197 (LALAVLAIVMMTNSLSTVDIV), 205–225 (ILSWNIWRQPVGFLIFWICAL), 267–287 (VLSAVLVSVLYLGGWGFPIPV), 309–329 (TVGIVMTVLKAYLLVFVAILL), and 348–368 (FLLPLSLVNLLVTAALKLAFP).

The protein belongs to the complex I subunit 1 family. NDH-1 is composed of at least 11 different subunits.

It is found in the cellular thylakoid membrane. It carries out the reaction a plastoquinone + NADH + (n+1) H(+)(in) = a plastoquinol + NAD(+) + n H(+)(out). The catalysed reaction is a plastoquinone + NADPH + (n+1) H(+)(in) = a plastoquinol + NADP(+) + n H(+)(out). Functionally, NDH-1 shuttles electrons from an unknown electron donor, via FMN and iron-sulfur (Fe-S) centers, to quinones in the respiratory and/or the photosynthetic chain. The immediate electron acceptor for the enzyme in this species is believed to be plastoquinone. Couples the redox reaction to proton translocation, and thus conserves the redox energy in a proton gradient. The polypeptide is NAD(P)H-quinone oxidoreductase subunit 1 (Synechococcus sp. (strain CC9605)).